Consider the following 405-residue polypeptide: Arginine deiminase (405 aa).

The active-site Amidino-cysteine intermediate is the cysteine 395.

The protein belongs to the arginine deiminase family.

Its subcellular location is the cytoplasm. It catalyses the reaction L-arginine + H2O = L-citrulline + NH4(+). It participates in amino-acid degradation; L-arginine degradation via ADI pathway; carbamoyl phosphate from L-arginine: step 1/2. The protein is Arginine deiminase of Rhodococcus jostii (strain RHA1).